A 475-amino-acid chain; its full sequence is Ribulose bisphosphate carboxylase large chain (475 aa).

Residues 1-2 (MS) constitute a propeptide that is removed on maturation. N-acetylproline is present on proline 3. Position 14 is an N6,N6,N6-trimethyllysine (lysine 14). Substrate contacts are provided by asparagine 123 and threonine 173. The active-site Proton acceptor is the lysine 175. Lysine 177 contributes to the substrate binding site. Mg(2+) is bound by residues lysine 201, aspartate 203, and glutamate 204. Lysine 201 is subject to N6-carboxylysine. The active-site Proton acceptor is histidine 294. The substrate site is built by arginine 295, histidine 327, and serine 379.

The protein belongs to the RuBisCO large chain family. Type I subfamily. In terms of assembly, heterohexadecamer of 8 large chains and 8 small chains; disulfide-linked. The disulfide link is formed within the large subunit homodimers. It depends on Mg(2+) as a cofactor. The disulfide bond which can form in the large chain dimeric partners within the hexadecamer appears to be associated with oxidative stress and protein turnover.

It is found in the plastid. The protein resides in the chloroplast. It carries out the reaction 2 (2R)-3-phosphoglycerate + 2 H(+) = D-ribulose 1,5-bisphosphate + CO2 + H2O. The catalysed reaction is D-ribulose 1,5-bisphosphate + O2 = 2-phosphoglycolate + (2R)-3-phosphoglycerate + 2 H(+). In terms of biological role, ruBisCO catalyzes two reactions: the carboxylation of D-ribulose 1,5-bisphosphate, the primary event in carbon dioxide fixation, as well as the oxidative fragmentation of the pentose substrate in the photorespiration process. Both reactions occur simultaneously and in competition at the same active site. This chain is Ribulose bisphosphate carboxylase large chain, found in Magnolia macrophylla (Bigleaf magnolia).